Here is a 252-residue protein sequence, read N- to C-terminus: Neurotrophic factor BDNF precursor form (252 aa).

The signal sequence occupies residues 1 to 18 (MTILFLTMVISYFGCMKA). A propeptide spanning residues 19–133 (APMKEANVRG…AANMSMRVRR (115 aa)) is cleaved from the precursor. The segment at 43-62 (LESVNGPKAGSRGLTSSSSS) is disordered. An N-linked (GlcNAc...) asparagine glycan is attached at N126. 3 disulfides stabilise this stretch: C146-C213, C191-C242, and C201-C244.

It belongs to the NGF-beta family. In terms of assembly, monomers and homodimers. Binds to NTRK2/TRKB. Can form heterodimers with other neurotrophin family members, such as NTF3 and NTF4 (in vitro), but the physiological relevance of this is not clear. BDNF precursor form: interacts with the heterodimer formed by NGFR and SORCS2. Mature BDNF has much lower affinity for the heterodimer formed by NGFR and SORCS2. N-glycosylated and glycosulfated, contrary to mature BDNF. Post-translationally, mature BDNF is produced by proteolytic removal of the propeptide, catalyzed by a FURIN family member. In addition, the precursor form is proteolytically cleaved within the propeptide, but this is not an obligatory intermediate for the production of mature BDNF. Can be converted into mature BDNF by plasmin (PLG). In terms of tissue distribution, brain and central nervous system.

The protein localises to the secreted. Its function is as follows. Important signaling molecule that activates signaling cascades downstream of NTRK2. During development, promotes the survival and differentiation of selected neuronal populations of the peripheral and central nervous systems. Participates in axonal growth, pathfinding and in the modulation of dendritic growth and morphology. Major regulator of synaptic transmission and plasticity at adult synapses in many regions of the CNS. The versatility of BDNF is emphasized by its contribution to a range of adaptive neuronal responses including long-term potentiation (LTP), long-term depression (LTD), certain forms of short-term synaptic plasticity, as well as homeostatic regulation of intrinsic neuronal excitability. Functionally, important signaling molecule that activates signaling cascades downstream of NTRK2. Activates signaling cascades via the heterodimeric receptor formed by NGFR and SORCS2. Signaling via NGFR and SORCS2 plays a role in synaptic plasticity and long-term depression (LTD). Binding to NGFR and SORCS2 promotes neuronal apoptosis. Promotes neuronal growth cone collapse. The sequence is that of Neurotrophic factor BDNF precursor form (BDNF) from Sus scrofa (Pig).